The chain runs to 118 residues: MLKIKLFSLVAIPFLFLSSYTSYAGDKYTITGAVENVSYNNSPTWPCYIAVDGEDDGKGGRRNYFHAANNTSICGLAERAKILNYRVKIYAEVDTGANIVYQIEFANTQSKYWDRASR.

In Acyrthosiphon pisum secondary endosymbiont phage 1 (Bacteriophage APSE-1), this protein is Putative protein p10 (10).